We begin with the raw amino-acid sequence, 313 residues long: tRNA dimethylallyltransferase (313 aa).

17-24 (GPTASGKT) is a binding site for ATP. Residue 19–24 (TASGKT) participates in substrate binding. Interaction with substrate tRNA regions lie at residues 42 to 45 (DSAL), 166 to 170 (QRLSR), and 247 to 252 (RCVGYR).

The protein belongs to the IPP transferase family. In terms of assembly, monomer. Requires Mg(2+) as cofactor.

The enzyme catalyses adenosine(37) in tRNA + dimethylallyl diphosphate = N(6)-dimethylallyladenosine(37) in tRNA + diphosphate. Its function is as follows. Catalyzes the transfer of a dimethylallyl group onto the adenine at position 37 in tRNAs that read codons beginning with uridine, leading to the formation of N6-(dimethylallyl)adenosine (i(6)A). The chain is tRNA dimethylallyltransferase from Pectobacterium atrosepticum (strain SCRI 1043 / ATCC BAA-672) (Erwinia carotovora subsp. atroseptica).